The chain runs to 727 residues: NADH-ubiquinone oxidoreductase 75 kDa subunit, mitochondrial (727 aa).

A mitochondrion-targeting transit peptide spans 1-23; sequence MLRIPVKRALIGLSKSPKGYVRS. Residues 30-108 enclose the 2Fe-2S ferredoxin-type domain; it reads NLIEVFVDGQ…GWNILTNSEK (79 aa). [2Fe-2S] cluster contacts are provided by Cys64, Cys75, and Cys78. Lys84 is modified (N6-acetyllysine). Cys92 provides a ligand contact to [2Fe-2S] cluster. In terms of domain architecture, 4Fe-4S His(Cys)3-ligated-type spans 108–147; sequence KSKKAREGVMEFLLANHPLDCPICDQGGECDLQDQSMMFG. The [4Fe-4S] cluster site is built by His124, Cys128, Cys131, Cys137, Cys176, Cys179, Cys182, and Cys226. A 4Fe-4S Mo/W bis-MGD-type domain is found at 245 to 301; it reads TRKTESIDVMDAVGSNIVVSTRTGEVMRILPRMHEDINEEWISDKTRFAYDGLKRQR. N6-acetyllysine occurs at positions 499 and 709.

It belongs to the complex I 75 kDa subunit family. In terms of assembly, core subunit of respiratory chain NADH dehydrogenase (Complex I) which is composed of 45 different subunits. This is the largest subunit of complex I and it is a component of the iron-sulfur (IP) fragment of the enzyme. Complex I associates with ubiquinol-cytochrome reductase complex (Complex III) to form supercomplexes. Interacts with MDM2 and AKAP1. [2Fe-2S] cluster is required as a cofactor. Requires [4Fe-4S] cluster as cofactor.

Its subcellular location is the mitochondrion inner membrane. It catalyses the reaction a ubiquinone + NADH + 5 H(+)(in) = a ubiquinol + NAD(+) + 4 H(+)(out). Functionally, core subunit of the mitochondrial membrane respiratory chain NADH dehydrogenase (Complex I) which catalyzes electron transfer from NADH through the respiratory chain, using ubiquinone as an electron acceptor. Essential for catalysing the entry and efficient transfer of electrons within complex I. Plays a key role in the assembly and stability of complex I and participates in the association of complex I with ubiquinol-cytochrome reductase complex (Complex III) to form supercomplexes. This chain is NADH-ubiquinone oxidoreductase 75 kDa subunit, mitochondrial (Ndufs1), found in Rattus norvegicus (Rat).